The following is a 1604-amino-acid chain: MGAKESRIGFLSYEEALRRVTDVELKRLKDAFKRTCGLSYYMSQHCFIREVLGDGVPPKVAEVIYCSFGGTSKGLHFNNLIVGLVLLTRGKDEEKAKYIFSLFSSESGSYVVREEMERMLHVVDGKVPDTLRKCFSEGEKVNYEKFRNWLLLNKDAFTFSRWLLSGGVYVTLTDDSDTPTFYQTLAGVTHLEESDIIDLEKRYWLLKAQSRTGRFDLETFGPLVSPPIRPSLSEGLFNAFDENRDNHIDFKEISCGLSACCRGPLAERQKFCFKVFDVDRDGVLSRVELKDMVVALLEVWKDNRTDDIPELHMDLSDIVERILNAHDTTKVGHLTLEDYQIWSVKNVLANEFLNLLFQVCHIVLGLRPATPEEEGQIIRGWLERESRYGLQPGHNWFIISMQWWQQWKEYVKYDASPVVIEPSSVLNGGKFSFGTAAHPIEHGEDRISNNLGYMNTTEEKYSDNISSASEASESTGSGFLYSGTPGADMCFARQHNTSDNNNQCLLGANGNILLHLNPQKPGAIDNQPLVTQEPVKATSLTLEGGRLKRTPQLIHGRDYEMVPEPVWRALYHWYGSNLALPRPVIKNSKTDIPELELFPRYLLFLRQQPATRTQQSNIWVNMGNVPSPNAPLKRVLAYTGCFSRMQTIKEIHEYLSQRLRIKEEDMRLWLYNSENYLTLLDDEDHRLEYLKIQDEQHLVIEVRNKDMSWPEEMSFIANSSKIDRHKVPTEKGATGLSNLGNTCFMNSSIQCVSNTQPLTQYFISGRHLYELNRTNPIGMKGHMAKCYGDLVQELWSGTQKNVAPLKLRWTIAKYAPRFNGFQQQDSQELLAFLLDGLHEDLNRVHEKPYVELKDSDGRPDWEVAAEAWDNHLRRNRSIVVDLFHGQLRSQVKCKTCGHISVRFDPFNFLSLPLPMDSYMHLEITVIKLDGTTPIRYGLRLNMDEKYTGLKKQLSDLCGLKSEQILFAEVHSSNIKNFPQDNQKVRLSVSGFLCAFEIPIPASPVSACSPIQTDCSSSPSTNGLFTLTTNGDLPRPIFIPNGMPNTVVPCGTEKNVTNGIVNGHMPPLPDDPFTGYIIAVHRKMMRTELYFLSSQKNRPSLFGMPLIVPCTVHTRKKDLYDAVWIQVSRLASPLPPQEASNHAQDCDDSMGYQYPFTLRVVQKDGNSCAWCPWYRFCRGCKIDCGEDRAFIGNACIAVDWDPTALHLRYQTSQERVVEEHESVEQSRRAQAEPINLDSCLRAFTSEEELGENEMYYCSKCKTHCLATKKLDLWRLPPILIIHLKRFQFVNGRWIKSQKIVKFPRESFDPSAFLVPRDPTLCQHKPLTPQGDDFSELRIPAGDVKKVDIQSSAGEEDVLLSKSPSSLSANVTSSPKGSPSSSRKSGASCPSSKNSSPNSSPRTLGRNKGRLRLPQIGSKNKLSNSKENLDTSKENGAGQICELADTLNRRHVLGGSQPELVTPLDHEITLANGFLYEHEACGNGYSNGQLGNHSEEDSTDDQREETHSKPIYNLYAISCHSGILGGGHYVTYAKNPNCKWYCYNDSSCKELHPDEIDTDSAYILFYEQQGIDCAQFLPKTDGKKMADTSSMDEDFESDYKKYCVLQ.

EF-hand domains follow at residues 91–126 (KDEE…VDGK), 228–263 (IRPS…CCRG), and 264–299 (PLAE…LLEV). Aspartate 241, asparagine 243, aspartate 245, histidine 247, glutamate 252, aspartate 277, aspartate 279, aspartate 281, and glutamate 288 together coordinate Ca(2+). One can recognise a DUSP domain in the interval 369-585 (ATPEEEGQII…SNLALPRPVI (217 aa)). A USP domain is found at 734-1567 (TGLSNLGNTC…SAYILFYEQQ (834 aa)). The active-site Nucleophile is cysteine 743. Phosphotyrosine is present on tyrosine 1173. Serine 1350 carries the post-translational modification Phosphoserine. The interval 1353 to 1432 (EEDVLLSKSP…SKENLDTSKE (80 aa)) is disordered. Residues 1360–1370 (KSPSSLSANVT) show a composition bias toward polar residues. Over residues 1371–1399 (SSPKGSPSSSRKSGASCPSSKNSSPNSSP) the composition is skewed to low complexity. A phosphoserine mark is found at serine 1372 and serine 1376. Positions 1415-1424 (GSKNKLSNSK) are enriched in polar residues. Phosphoserine is present on serine 1454. Residues 1484-1504 (SNGQLGNHSEEDSTDDQREET) are disordered. Positions 1491-1504 (HSEEDSTDDQREET) are enriched in basic and acidic residues. The active-site Proton acceptor is histidine 1526. Serine 1588 carries the phosphoserine modification. Cysteine methyl ester is present on cysteine 1601. The S-farnesyl cysteine moiety is linked to residue cysteine 1601. The propeptide at 1602–1604 (VLQ) is removed in mature form.

The protein belongs to the peptidase C19 family.

The protein localises to the golgi apparatus membrane. The catalysed reaction is Thiol-dependent hydrolysis of ester, thioester, amide, peptide and isopeptide bonds formed by the C-terminal Gly of ubiquitin (a 76-residue protein attached to proteins as an intracellular targeting signal).. Deubiquitinase that can remove conjugated ubiquitin from target proteins, such as RAB7A and LAMTOR1. Acts as a positive regulator of the mTORC1 signaling by mediating deubiquitination of LAMTOR1, thereby promoting the association between LAMTOR1 and the lysosomal V-ATPase complex and subsequent activation of the mTORC1 complex. This Mus musculus (Mouse) protein is Ubiquitin carboxyl-terminal hydrolase 32.